A 491-amino-acid chain; its full sequence is ATP synthase subunit beta, chloroplastic (491 aa).

172-179 provides a ligand contact to ATP; that stretch reads GGAGVGKT.

The protein belongs to the ATPase alpha/beta chains family. In terms of assembly, F-type ATPases have 2 components, CF(1) - the catalytic core - and CF(0) - the membrane proton channel. CF(1) has five subunits: alpha(3), beta(3), gamma(1), delta(1), epsilon(1). CF(0) has four main subunits: a(1), b(1), b'(1) and c(9-12).

The protein localises to the plastid. It is found in the chloroplast thylakoid membrane. The enzyme catalyses ATP + H2O + 4 H(+)(in) = ADP + phosphate + 5 H(+)(out). Functionally, produces ATP from ADP in the presence of a proton gradient across the membrane. The catalytic sites are hosted primarily by the beta subunits. The protein is ATP synthase subunit beta, chloroplastic of Pisum sativum (Garden pea).